Reading from the N-terminus, the 227-residue chain is PKHD-type hydroxylase A1S_0473 (227 aa).

Residues 78-178 enclose the Fe2OG dioxygenase domain; sequence KIIPPLFNRY…RFASFFWVQS (101 aa). Fe cation is bound by residues His96, Asp98, and His159. Arg169 is a 2-oxoglutarate binding site.

Fe(2+) serves as cofactor. It depends on L-ascorbate as a cofactor.

The chain is PKHD-type hydroxylase A1S_0473 from Acinetobacter baumannii (strain ATCC 17978 / DSM 105126 / CIP 53.77 / LMG 1025 / NCDC KC755 / 5377).